A 646-amino-acid polypeptide reads, in one-letter code: Phosphomethylpyrimidine synthase (646 aa).

Substrate-binding positions include Asn235, Met264, Tyr293, His329, 349–351 (SRG), 390–393 (DGLR), and Glu429. His433 provides a ligand contact to Zn(2+). Position 456 (Tyr456) interacts with substrate. Zn(2+) is bound at residue His497. 3 residues coordinate [4Fe-4S] cluster: Cys577, Cys580, and Cys585. Residues 624 to 646 (KSEEFRATGSELYHPAVHAEADE) form a disordered region.

This sequence belongs to the ThiC family. In terms of assembly, homodimer. Requires [4Fe-4S] cluster as cofactor.

The enzyme catalyses 5-amino-1-(5-phospho-beta-D-ribosyl)imidazole + S-adenosyl-L-methionine = 4-amino-2-methyl-5-(phosphooxymethyl)pyrimidine + CO + 5'-deoxyadenosine + formate + L-methionine + 3 H(+). It functions in the pathway cofactor biosynthesis; thiamine diphosphate biosynthesis. Functionally, catalyzes the synthesis of the hydroxymethylpyrimidine phosphate (HMP-P) moiety of thiamine from aminoimidazole ribotide (AIR) in a radical S-adenosyl-L-methionine (SAM)-dependent reaction. The sequence is that of Phosphomethylpyrimidine synthase from Vibrio parahaemolyticus serotype O3:K6 (strain RIMD 2210633).